The chain runs to 427 residues: Ribosomal protein uS12 methylthiotransferase RimO (427 aa).

The MTTase N-terminal domain maps to 1–116 (MNFYVDVLGC…IAENIGKESI (116 aa)). [4Fe-4S] cluster-binding residues include C10, C46, C79, C145, C149, and C152. Residues 131 to 360 (VDEKQYAYVK…MEEQSKISFE (230 aa)) enclose the Radical SAM core domain. One can recognise a TRAM domain in the interval 363-426 (EKMVGKTFKV…VYDLEGKIVE (64 aa)).

It belongs to the methylthiotransferase family. RimO subfamily. Requires [4Fe-4S] cluster as cofactor.

The protein resides in the cytoplasm. The enzyme catalyses L-aspartate(89)-[ribosomal protein uS12]-hydrogen + (sulfur carrier)-SH + AH2 + 2 S-adenosyl-L-methionine = 3-methylsulfanyl-L-aspartate(89)-[ribosomal protein uS12]-hydrogen + (sulfur carrier)-H + 5'-deoxyadenosine + L-methionine + A + S-adenosyl-L-homocysteine + 2 H(+). In terms of biological role, catalyzes the methylthiolation of an aspartic acid residue of ribosomal protein uS12. The protein is Ribosomal protein uS12 methylthiotransferase RimO of Thermosipho africanus (strain TCF52B).